A 419-amino-acid polypeptide reads, in one-letter code: Keratin, type I cytoskeletal 47 kDa (419 aa).

The interval 1-81 (MSFRSSSSYS…SSSFSNFGGN (81 aa)) is head. A coil 1A region spans residues 82–117 (DKQTMQNLNDRLASYLEKVRALEAANADLELKIREW). Residues 82–397 (DKQTMQNLND…RLLEGEFGSL (316 aa)) enclose the IF rod domain. Residues 118 to 139 (YEKQKGSGIGAGSKDFSKYFEI) form a linker 1 region. Residues 140–231 (ISDLRNKILS…KNHEEEMSIA (92 aa)) are coil 1B. Residues 232-254 (KSSSAGQVNVEMDAAPGIDLNKI) are linker 12. The coil 2 stretch occupies residues 255–393 (LSDMRADYET…ETYRRLLEGE (139 aa)). Positions 394-419 (FGSLKSSIVQATEVSTSQSSSSSKKD) are tail.

Belongs to the intermediate filament family. Heterotetramer of two type I and two type II keratins.

The chain is Keratin, type I cytoskeletal 47 kDa (xk81b2) from Xenopus laevis (African clawed frog).